We begin with the raw amino-acid sequence, 289 residues long: ATP synthase mitochondrial F1 complex assembly factor 2 (289 aa).

Residues 1–40 (MWRIYPRLRDRWRGLLDRRLSDPTVSVWPGPAPQPPARAY) constitute a mitochondrion transit peptide. Residue K133 is modified to N6-succinyllysine.

The protein belongs to the ATP12 family. Interacts with ATP5F1B; involved in the assembly of the F1 component of the mitochondrial ATP synthase (ATPase). Interacts with FMC1.

Its subcellular location is the mitochondrion inner membrane. In terms of biological role, plays a role in the assembly of the F1 component of the mitochondrial ATP synthase (ATPase). The sequence is that of ATP synthase mitochondrial F1 complex assembly factor 2 from Mus musculus (Mouse).